Consider the following 61-residue polypeptide: Metallothionein-1F (61 aa).

An N-acetylmethionine modification is found at Met-1. Positions 1–29 (MDPNCSCPTGGSCTCAGSCTCKACRCTSC) are beta. 18 residues coordinate a divalent metal cation: Cys-5, Cys-7, Cys-13, Cys-15, Cys-19, Cys-21, Cys-24, Cys-26, Cys-29, Cys-33, Cys-34, Cys-36, Cys-37, Cys-41, Cys-44, Cys-48, Cys-50, and Cys-57. Positions 30–61 (KKSCCSCCPAGCAKCAQGCICKGASDKCSCCA) are alpha. Ser-58 carries the phosphoserine modification. 2 residues coordinate a divalent metal cation: Cys-59 and Cys-60.

The protein belongs to the metallothionein superfamily. Type 1 family. In terms of assembly, monomer.

In terms of biological role, metallothioneins have a high content of cysteine residues that bind various heavy metals; these proteins are transcriptionally regulated by both heavy metals and glucocorticoids. This is Metallothionein-1F (MT1F) from Sus scrofa (Pig).